Reading from the N-terminus, the 681-residue chain is UvrABC system protein B (681 aa).

Residues 30–419 (QGVRDGRHWQ…GEVVELLVRP (390 aa)) form the Helicase ATP-binding domain. 43–50 (GVTGSGKT) lines the ATP pocket. Positions 96-119 (YYDFYQPEAYLPSLDKYIAKDLRI) match the Beta-hairpin motif. The 167-residue stretch at 435-601 (QIDNLLAEIR…SIVKSVDQIL (167 aa)) folds into the Helicase C-terminal domain. The UVR domain maps to 641–676 (YAIVEGLRLEMQEAAEHMEYEKAAYLRDEITKMEQV).

It belongs to the UvrB family. In terms of assembly, forms a heterotetramer with UvrA during the search for lesions. Interacts with UvrC in an incision complex.

The protein resides in the cytoplasm. Its function is as follows. The UvrABC repair system catalyzes the recognition and processing of DNA lesions. A damage recognition complex composed of 2 UvrA and 2 UvrB subunits scans DNA for abnormalities. Upon binding of the UvrA(2)B(2) complex to a putative damaged site, the DNA wraps around one UvrB monomer. DNA wrap is dependent on ATP binding by UvrB and probably causes local melting of the DNA helix, facilitating insertion of UvrB beta-hairpin between the DNA strands. Then UvrB probes one DNA strand for the presence of a lesion. If a lesion is found the UvrA subunits dissociate and the UvrB-DNA preincision complex is formed. This complex is subsequently bound by UvrC and the second UvrB is released. If no lesion is found, the DNA wraps around the other UvrB subunit that will check the other stand for damage. This Chlorobium chlorochromatii (strain CaD3) protein is UvrABC system protein B.